The chain runs to 121 residues: Large ribosomal subunit protein uL18 (121 aa).

This sequence belongs to the universal ribosomal protein uL18 family. In terms of assembly, part of the 50S ribosomal subunit; part of the 5S rRNA/L5/L18/L25 subcomplex. Contacts the 5S and 23S rRNAs.

Its function is as follows. This is one of the proteins that bind and probably mediate the attachment of the 5S RNA into the large ribosomal subunit, where it forms part of the central protuberance. The polypeptide is Large ribosomal subunit protein uL18 (Thermoanaerobacter pseudethanolicus (strain ATCC 33223 / 39E) (Clostridium thermohydrosulfuricum)).